Consider the following 571-residue polypeptide: MRMDTLDSQAAEAAQEEEIQRKLEELVTLAKDQGFITYEEINEILPPSFDTPEQIDQVLIFLAGMDVQVLNQADVERQKERKKEAKELEGLAKRSEGTPDDPVRMYLKEMGTVPLLTREEEVEISKRIEKAQVQIERIILRFRYSTKEAVSIAQYLINGKERFDKIVSEKEVEDKTHFLNLLPKLISLLKEEDAYLEERLLALKDPALSKPDQARLNDELEKCRIRTQAYLRCFHCRHNVTEDFGEVVFKAYDSFLQLEQQINDLKARAERNKFAAAKLAAARRKLHKREVAAGRTLEEFKKDVRMLQRWMDKSQEAKKEMVESNLRLVISIAKKYTNRGLSFLDLIQEGNMGLMKAVEKFEYRRGYKFSTYATWWIRQAVTRAIADQARTIRIPVHMIETINKVLRGAKKLMMETGKEPTPEELGEELGFTPDRVREIYKIAQHPISLQAEVGDGGESSFGDFLEDTAVESPAEATGYSMLKDKMKEVLKTLTDRERFVLIHRFGLLDGRPKTLEEVGSAFNVTRERIRQIEAKALRKMRHPIRSKQLRAFLDLLEEEKIGSGKIKSYKN.

The interval 321–391 is sigma-70 factor domain-2; sequence MVESNLRLVI…TRAIADQART (71 aa). The Interaction with polymerase core subunit RpoC motif lies at 345-348; that stretch reads DLIQ. A sigma-70 factor domain-3 region spans residues 400–476; that stretch reads ETINKVLRGA…DTAVESPAEA (77 aa). Residues 489-542 form a sigma-70 factor domain-4 region; sequence VLKTLTDRERFVLIHRFGLLDGRPKTLEEVGSAFNVTRERIRQIEAKALRKMRH. Positions 515–534 form a DNA-binding region, H-T-H motif; sequence LEEVGSAFNVTRERIRQIEA.

This sequence belongs to the sigma-70 factor family. RpoD/SigA subfamily. As to quaternary structure, interacts transiently with the RNA polymerase catalytic core.

The protein localises to the cytoplasm. In terms of biological role, sigma factors are initiation factors that promote the attachment of RNA polymerase to specific initiation sites and are then released. This sigma factor is the primary sigma factor during exponential growth. This Chlamydia trachomatis serovar D (strain ATCC VR-885 / DSM 19411 / UW-3/Cx) protein is RNA polymerase sigma factor SigA.